A 255-amino-acid chain; its full sequence is MEIIPAIDLLDSACVRLHQGDYAKVTRFSEDPVAQALSWQKQGATRLHLVDLDGAKSGEPVNDSCVRAITSALNIPVQLGGGVRTLERAEELLAYGLEQVILGTVAIEQPQLVKQLAQRNPGRIIVGIDAKNGKVATRGWISQSEVNATDLAADFNAAGIAAIISTDIATDGTLEGPNLESLRAMANASSVPLIASGGVGCMADLLSLLALEPYGVSGVIVGRALYDGKVDLKEAIRAIGDGRLQDPPSSKPLMA.

Asp-8 acts as the Proton acceptor in catalysis. Asp-129 functions as the Proton donor in the catalytic mechanism.

This sequence belongs to the HisA/HisF family.

The protein resides in the cytoplasm. It carries out the reaction 1-(5-phospho-beta-D-ribosyl)-5-[(5-phospho-beta-D-ribosylamino)methylideneamino]imidazole-4-carboxamide = 5-[(5-phospho-1-deoxy-D-ribulos-1-ylimino)methylamino]-1-(5-phospho-beta-D-ribosyl)imidazole-4-carboxamide. The protein operates within amino-acid biosynthesis; L-histidine biosynthesis; L-histidine from 5-phospho-alpha-D-ribose 1-diphosphate: step 4/9. The protein is 1-(5-phosphoribosyl)-5-[(5-phosphoribosylamino)methylideneamino] imidazole-4-carboxamide isomerase of Prochlorococcus marinus (strain MIT 9303).